The following is a 227-amino-acid chain: Cytochrome c oxidase subunit 2 (227 aa).

Residues 1–14 are Mitochondrial intermembrane-facing; that stretch reads MTHPLQLGFQDATS. The chain crosses the membrane as a helical span at residues 15–45; it reads PIMEELLHFHDHTLMIVFLISSLVLYIITLM. Over 46-59 the chain is Mitochondrial matrix; sequence LTTKLTHTSTMDAQ. The helical transmembrane segment at 60–87 threads the bilayer; it reads EVETVWTILPAIILILIALPSLRILYMM. The Mitochondrial intermembrane segment spans residues 88–227; that stretch reads DEINNPLLTV…YFEDWSVSMT (140 aa). Residues His-161, Cys-196, Glu-198, Cys-200, His-204, and Met-207 each coordinate Cu cation. Glu-198 contributes to the Mg(2+) binding site. Phosphotyrosine is present on Tyr-218.

It belongs to the cytochrome c oxidase subunit 2 family. As to quaternary structure, component of the cytochrome c oxidase (complex IV, CIV), a multisubunit enzyme composed of 14 subunits. The complex is composed of a catalytic core of 3 subunits MT-CO1, MT-CO2 and MT-CO3, encoded in the mitochondrial DNA, and 11 supernumerary subunits COX4I, COX5A, COX5B, COX6A, COX6B, COX6C, COX7A, COX7B, COX7C, COX8 and NDUFA4, which are encoded in the nuclear genome. The complex exists as a monomer or a dimer and forms supercomplexes (SCs) in the inner mitochondrial membrane with NADH-ubiquinone oxidoreductase (complex I, CI) and ubiquinol-cytochrome c oxidoreductase (cytochrome b-c1 complex, complex III, CIII), resulting in different assemblies (supercomplex SCI(1)III(2)IV(1) and megacomplex MCI(2)III(2)IV(2)). Found in a complex with TMEM177, COA6, COX18, COX20, SCO1 and SCO2. Interacts with TMEM177 in a COX20-dependent manner. Interacts with COX20. Interacts with COX16. The cofactor is Cu cation.

The protein resides in the mitochondrion inner membrane. The enzyme catalyses 4 Fe(II)-[cytochrome c] + O2 + 8 H(+)(in) = 4 Fe(III)-[cytochrome c] + 2 H2O + 4 H(+)(out). Functionally, component of the cytochrome c oxidase, the last enzyme in the mitochondrial electron transport chain which drives oxidative phosphorylation. The respiratory chain contains 3 multisubunit complexes succinate dehydrogenase (complex II, CII), ubiquinol-cytochrome c oxidoreductase (cytochrome b-c1 complex, complex III, CIII) and cytochrome c oxidase (complex IV, CIV), that cooperate to transfer electrons derived from NADH and succinate to molecular oxygen, creating an electrochemical gradient over the inner membrane that drives transmembrane transport and the ATP synthase. Cytochrome c oxidase is the component of the respiratory chain that catalyzes the reduction of oxygen to water. Electrons originating from reduced cytochrome c in the intermembrane space (IMS) are transferred via the dinuclear copper A center (CU(A)) of subunit 2 and heme A of subunit 1 to the active site in subunit 1, a binuclear center (BNC) formed by heme A3 and copper B (CU(B)). The BNC reduces molecular oxygen to 2 water molecules using 4 electrons from cytochrome c in the IMS and 4 protons from the mitochondrial matrix. The protein is Cytochrome c oxidase subunit 2 (MT-CO2) of Carlito syrichta (Philippine tarsier).